The following is a 117-amino-acid chain: UPF0102 protein Rsph17029_0461 (117 aa).

This sequence belongs to the UPF0102 family.

This chain is UPF0102 protein Rsph17029_0461, found in Cereibacter sphaeroides (strain ATCC 17029 / ATH 2.4.9) (Rhodobacter sphaeroides).